The chain runs to 176 residues: Adenine phosphoribosyltransferase (176 aa).

It belongs to the purine/pyrimidine phosphoribosyltransferase family. As to quaternary structure, homodimer.

The protein localises to the cytoplasm. The enzyme catalyses AMP + diphosphate = 5-phospho-alpha-D-ribose 1-diphosphate + adenine. The protein operates within purine metabolism; AMP biosynthesis via salvage pathway; AMP from adenine: step 1/1. Its function is as follows. Catalyzes a salvage reaction resulting in the formation of AMP, that is energically less costly than de novo synthesis. The sequence is that of Adenine phosphoribosyltransferase from Roseobacter denitrificans (strain ATCC 33942 / OCh 114) (Erythrobacter sp. (strain OCh 114)).